Here is an 847-residue protein sequence, read N- to C-terminus: Alanine--tRNA ligase (847 aa).

The Zn(2+) site is built by H554, H558, C656, and H660.

This sequence belongs to the class-II aminoacyl-tRNA synthetase family. The cofactor is Zn(2+).

It is found in the cytoplasm. The catalysed reaction is tRNA(Ala) + L-alanine + ATP = L-alanyl-tRNA(Ala) + AMP + diphosphate. In terms of biological role, catalyzes the attachment of alanine to tRNA(Ala) in a two-step reaction: alanine is first activated by ATP to form Ala-AMP and then transferred to the acceptor end of tRNA(Ala). Also edits incorrectly charged Ser-tRNA(Ala) and Gly-tRNA(Ala) via its editing domain. The chain is Alanine--tRNA ligase from Helicobacter pylori (strain HPAG1).